Here is a 290-residue protein sequence, read N- to C-terminus: MSTLAIDIGGTKLAAARVDDDLRIRERRELPTPASKTPDALREALKVLVEPLQTTAQRVAIASTGIIREGALLAINPHNLGGLLHFPLVPTLEDLTGLPTLAVNDAQAAAWAEYHALASDVRDMVFITVSTGVGGGVVSDGRLLTGMSGLAGHLGHTLADPQGPVCGCGRRGCVEAIASGRGIAAAAQGSLAGCDARTVFAHAAAGNEQAVRLVQHSAQVVARLIADVKATTDCQQVVIGGSVGLAEGYLAQVRHFLAQEPAVYQVALSAAHYRHDAGLLGAALLAQGDK.

Residues 5 to 12 (AIDIGGTK) and 132 to 139 (GVGGGVVS) contribute to the ATP site. 4 residues coordinate Zn(2+): His156, Cys166, Cys168, and Cys173.

It belongs to the ROK (NagC/XylR) family. NanK subfamily. As to quaternary structure, homodimer.

The enzyme catalyses an N-acyl-D-mannosamine + ATP = an N-acyl-D-mannosamine 6-phosphate + ADP + H(+). It functions in the pathway amino-sugar metabolism; N-acetylneuraminate degradation; D-fructose 6-phosphate from N-acetylneuraminate: step 2/5. In terms of biological role, catalyzes the phosphorylation of N-acetylmannosamine (ManNAc) to ManNAc-6-P. In Citrobacter koseri (strain ATCC BAA-895 / CDC 4225-83 / SGSC4696), this protein is N-acetylmannosamine kinase.